The primary structure comprises 793 residues: Wall-associated receptor kinase-like 18 (793 aa).

Residues 1–28 (MSNESTNCSFFLNLFMLLLLLIFYSADA) form the signal peptide. Residues 29-378 (CQRECGGISI…YRCVRDKTKA (350 aa)) lie on the Extracellular side of the membrane. N-linked (GlcNAc...) asparagine glycans are attached at residues N60, N130, N170, N238, N285, and N304. An atypical EGF-like region spans residues 312 to 371 (CTCGRITISETSYANCGCTYGYTGNPYVLNGCKDIDECKVKFEYCGKTETCVNFEGGYRC). 3 cysteine pairs are disulfide-bonded: C314/C327, C349/C362, and C356/C371. A helical membrane pass occupies residues 379-399 (IMIGAGTGFGVLVLVGGLWWL). Residues 400–793 (RKFLIKRRIT…VEPLFPRLTW (394 aa)) lie on the Cytoplasmic side of the membrane. The region spanning 453–728 (FSENRVLGHG…REVFTELERI (276 aa)) is the Protein kinase domain. ATP-binding positions include 459–467 (LGHGGQGTV) and K481. Y526 carries the phosphotyrosine modification. D579 functions as the Proton acceptor in the catalytic mechanism. Phosphothreonine is present on residues T613 and T618. The residue at position 626 (Y626) is a Phosphotyrosine. The disordered stretch occupies residues 733–757 (EDSQVHNRIDEEEEEEEEEEEVVTT). Positions 742–754 (DEEEEEEEEEEEV) are enriched in acidic residues.

Belongs to the protein kinase superfamily. Ser/Thr protein kinase family.

The protein localises to the membrane. The enzyme catalyses L-seryl-[protein] + ATP = O-phospho-L-seryl-[protein] + ADP + H(+). It carries out the reaction L-threonyl-[protein] + ATP = O-phospho-L-threonyl-[protein] + ADP + H(+). Its function is as follows. Serine/threonine-protein kinase that may function as a signaling receptor of extracellular matrix component. In Arabidopsis thaliana (Mouse-ear cress), this protein is Wall-associated receptor kinase-like 18 (WAKL18).